Reading from the N-terminus, the 371-residue chain is Cytochrome b (371 aa).

4 helical membrane passes run F25–V45, W69–I90, W105–L125, and F170–I190. Residues H75 and H89 each coordinate heme b. Residues H174 and H188 each contribute to the heme b site. H193 contacts a ubiquinone. The next 4 helical transmembrane spans lie at Y218–F238, L280–H300, L312–T332, and Y339–P358.

This sequence belongs to the cytochrome b family. As to quaternary structure, the cytochrome bc1 complex contains 3 respiratory subunits (MT-CYB, CYC1 and UQCRFS1), 2 core proteins (UQCRC1 and UQCRC2) and probably 6 low-molecular weight proteins. Heme b is required as a cofactor.

Its subcellular location is the mitochondrion inner membrane. Component of the ubiquinol-cytochrome c reductase complex (complex III or cytochrome b-c1 complex) that is part of the mitochondrial respiratory chain. The b-c1 complex mediates electron transfer from ubiquinol to cytochrome c. Contributes to the generation of a proton gradient across the mitochondrial membrane that is then used for ATP synthesis. The sequence is that of Cytochrome b (MT-CYB) from Python regius (Ball python).